Here is a 143-residue protein sequence, read N- to C-terminus: Mediator of RNA polymerase II transcription subunit 9 (143 aa).

Residues 84-141 (QDCNHKIFELQKRFESAREQIRQLPGIDYNKDEQLQRLELLRNQFKLKQQLIRKYKDT) are a coiled coil.

The protein belongs to the Mediator complex subunit 9 family. As to quaternary structure, component of the Mediator complex.

It is found in the nucleus. Functionally, component of the Mediator complex, a coactivator involved in the regulated transcription of nearly all RNA polymerase II-dependent genes. Mediator functions as a bridge to convey information from gene-specific regulatory proteins to the basal RNA polymerase II transcription machinery. Mediator is recruited to promoters by direct interactions with regulatory proteins and serves as a scaffold for the assembly of a functional preinitiation complex with RNA polymerase II and the general transcription factors. This chain is Mediator of RNA polymerase II transcription subunit 9 (MED9), found in Drosophila pseudoobscura pseudoobscura (Fruit fly).